The primary structure comprises 36 residues: Photosystem II reaction center protein X (36 aa).

Residues 9–29 traverse the membrane as a helical segment; sequence LWSIFWGGVVVALGAAALTAI.

Belongs to the PsbX family. Type 1 subfamily. As to quaternary structure, PSII is composed of 1 copy each of membrane proteins PsbA, PsbB, PsbC, PsbD, PsbE, PsbF, PsbH, PsbI, PsbJ, PsbK, PsbL, PsbM, PsbT, PsbX, Psb30/Ycf12, peripheral proteins PsbO, CyanoQ (PsbQ), PsbU, PsbV and a large number of cofactors. It forms dimeric complexes.

The protein localises to the cell inner membrane. Its function is as follows. Involved in the binding and/or turnover of quinones at the Q(B) site of photosystem II (PSII). PSII is a light-driven water plastoquinone oxidoreductase, using light energy to abstract electrons from H(2)O, generating a proton gradient subsequently used for ATP formation. The sequence is that of Photosystem II reaction center protein X from Gloeobacter violaceus (strain ATCC 29082 / PCC 7421).